Consider the following 509-residue polypeptide: MNEQQRLASQQVNSSTKKEEKDYSKYFESVYQPPSLKDAKKRGKEEVKIERDFGLPEEFRNFGTGRKFYIRTYGCQMNEHDTEVMAGIFTALGYEPTFSTEDADVVLLNTCAIRENAENKVFGELGHLKSLKRRNSDLLIGVCGCMSQEESVVNKIMQKNQHVDMVFGTHNIHRLPYILKDAMFSKETVVEVWSKEGDVIENLPKVRRGDIKAWVNIMYGCDKFCTYCIVPYTRGKERSRRPEDIIQEIRHLAANGYKEITLLGQNVNAYGKDFEDIEYGLGDLMDELRKVDIARIRFTTSHPRDFDDHLIEVLGKGGNLVEHIHLPVQSGSTEMLKIMARKYSREHYLELVRKIKEAIPNAVLTTDIIVGFPNETDEQFEETMSLYREVGFDTAFTFIYSPREGTPAAKMKDNVPMEVKKERLQRLNALVNKLAIEKNDRYKGQIVEVLVDGESKNNPEVLAGYTRTNKLVNFVAPKSLIGQLVKIKVTDAKTWSLNGELVEEPIEVE.

The span at 1-15 shows a compositional bias: polar residues; that stretch reads MNEQQRLASQQVNSS. Positions 1–23 are disordered; the sequence is MNEQQRLASQQVNSSTKKEEKDY. An MTTase N-terminal domain is found at 66–184; that stretch reads RKFYIRTYGC…LPYILKDAMF (119 aa). Residues C75, C111, C145, C221, C225, and C228 each coordinate [4Fe-4S] cluster. The Radical SAM core domain maps to 207 to 437; it reads RRGDIKAWVN…NALVNKLAIE (231 aa). One can recognise a TRAM domain in the interval 440–503; sequence DRYKGQIVEV…TWSLNGELVE (64 aa).

It belongs to the methylthiotransferase family. MiaB subfamily. Monomer. The cofactor is [4Fe-4S] cluster.

The protein localises to the cytoplasm. It catalyses the reaction N(6)-dimethylallyladenosine(37) in tRNA + (sulfur carrier)-SH + AH2 + 2 S-adenosyl-L-methionine = 2-methylsulfanyl-N(6)-dimethylallyladenosine(37) in tRNA + (sulfur carrier)-H + 5'-deoxyadenosine + L-methionine + A + S-adenosyl-L-homocysteine + 2 H(+). In terms of biological role, catalyzes the methylthiolation of N6-(dimethylallyl)adenosine (i(6)A), leading to the formation of 2-methylthio-N6-(dimethylallyl)adenosine (ms(2)i(6)A) at position 37 in tRNAs that read codons beginning with uridine. The sequence is that of tRNA-2-methylthio-N(6)-dimethylallyladenosine synthase from Bacillus anthracis.